Reading from the N-terminus, the 201-residue chain is Thioredoxin reductase-like selenoprotein T (201 aa).

The N-terminal stretch at 1–26 is a signal peptide; sequence MARSSGPLCLLLLGGLVAGILSGASA. A cross-link (cysteinyl-selenocysteine (Cys-Sec)) is located at residues 51-54; that stretch reads CVSU. Residue U54 is a non-standard amino acid, selenocysteine. The helical transmembrane segment at 96–116 threads the bilayer; that stretch reads VFKLVLIGLIIAGKDPFAFFG.

The protein belongs to the SelWTH family. Selenoprotein T subfamily. Post-translationally, may contain a selenide-sulfide bond between Cys-51 and Sec-54. This bond is speculated to serve as redox-active pair.

It is found in the endoplasmic reticulum membrane. It carries out the reaction [thioredoxin]-dithiol + NADP(+) = [thioredoxin]-disulfide + NADPH + H(+). In terms of biological role, selenoprotein with thioredoxin reductase-like oxidoreductase activity. The protein is Thioredoxin reductase-like selenoprotein T (selenot) of Xenopus tropicalis (Western clawed frog).